The following is a 115-amino-acid chain: UPF0738 protein SERP0585 (115 aa).

The protein belongs to the UPF0738 family.

The sequence is that of UPF0738 protein SERP0585 from Staphylococcus epidermidis (strain ATCC 35984 / DSM 28319 / BCRC 17069 / CCUG 31568 / BM 3577 / RP62A).